We begin with the raw amino-acid sequence, 260 residues long: Triosephosphate isomerase (260 aa).

A substrate-binding site is contributed by asparagine 11–lysine 13. Histidine 103 serves as the catalytic Electrophile. Catalysis depends on glutamate 175, which acts as the Proton acceptor. Substrate contacts are provided by residues glycine 181, serine 220, and glycine 241 to glycine 242.

Belongs to the triosephosphate isomerase family. Homodimer.

The protein localises to the cytoplasm. The enzyme catalyses D-glyceraldehyde 3-phosphate = dihydroxyacetone phosphate. It participates in carbohydrate biosynthesis; gluconeogenesis. The protein operates within carbohydrate degradation; glycolysis; D-glyceraldehyde 3-phosphate from glycerone phosphate: step 1/1. Its function is as follows. Involved in the gluconeogenesis. Catalyzes stereospecifically the conversion of dihydroxyacetone phosphate (DHAP) to D-glyceraldehyde-3-phosphate (G3P). The chain is Triosephosphate isomerase from Shewanella sp. (strain MR-7).